Consider the following 446-residue polypeptide: Exodeoxyribonuclease 7 large subunit (446 aa).

It belongs to the XseA family. In terms of assembly, heterooligomer composed of large and small subunits.

Its subcellular location is the cytoplasm. It catalyses the reaction Exonucleolytic cleavage in either 5'- to 3'- or 3'- to 5'-direction to yield nucleoside 5'-phosphates.. Bidirectionally degrades single-stranded DNA into large acid-insoluble oligonucleotides, which are then degraded further into small acid-soluble oligonucleotides. The sequence is that of Exodeoxyribonuclease 7 large subunit from Vibrio cholerae serotype O1 (strain ATCC 39315 / El Tor Inaba N16961).